The sequence spans 178 residues: Fatty-acid and retinol-binding protein 1 (178 aa).

Residues 1–16 form the signal peptide; it reads MYHQLILMALIGVIMA. 2 coiled-coil regions span residues 67 to 89 and 122 to 154; these read DAALEALKNKSDKLYQKAVELRN and QKLDMEKLKQAARDIIAKYEALNEETKEELKAT.

It belongs to the fatty-acid and retinol-binding protein (FARBP) family. Post-translationally, not glycosylated.

The protein localises to the secreted. Its function is as follows. Binds retinol and different fatty acids. The protein is Fatty-acid and retinol-binding protein 1 of Litomosoides sigmodontis (Filarial nematode worm).